The chain runs to 1726 residues: MSDFVESEAEESEEEYNHEGEVVPRVTKKFVEEEDDDEEEEEENLDDQDERGNLKDFINDDDDEEEGEEDEGSDSGDSEDDVGHKKRKRPSFDDRLEDDDFDLIEENLGVKVKRGQKYRRVKKMSDDDEDDEEEYGKEEHEKEAIAGEIFQDEEGEEGQEAVEAPMAPPDEEEEDDEESDIDDFIVDDDGQPLKKPKWRKKLPGYTDAALQEAQEIFGVDFDYDEFEKYNEYDEELEEDYEYEDDETEGEIRVRPKKTTKKRVSRRSIFEMYEPSELESSHLTDQDNEIRATDLPERFQLRSIPVKAAEDDELEEEADWIYRNAFATPTISLQDSCDYLDRGQPTSSFSRKGPSTVQKIKEALGFMRNQHFEVPFIAFYRKEYVEPELHINDLWRVWQWDEKWTQLRIRKENLTRLFEKMQAYQYEQISADPDKPLADGIRALDTTDMERLKDVQSMDELKDVYNHFLLYYGRDIPKMQNAAKASRKKLKRIKEDGDEEGEGEEAEDEEQRGPELKQASRRDMYTICQSAGLDGLAKKFGLTPEQFGENLRDSYQRHETEQFPAEPLELAKDYVCSQFPTPEAVLEGARYMVALQIAREPLVRQVLRQTFQERAKLNITPTKKGRKDVDEAHYAYSFKYLKNKPVKELRDDQFLKIGLAEDEGLLTIDISIDMKGVEGYGNDQTYFEEIKQFYYRDEFSHQVQEWNRQRTMAIERALQQFLYVQMAKELKNKLLAEARESVVKACSRKLYNWLRVAPYRPDQQVEEDDDFMDENQGKGIRVLGIAFSSARDHPVFCALVNGEGEVTDFLRLPHFTKRRTAWREEEREKKAQDIETLKKFLVNKKPHVVTIAGENRDAQMLTEDVKRIVHELDQGQQLSSIGVELVDNELAILYMNSKKSEAEFRDYPPVLRQAVSLARRIQDPLIEFAQVCSSDEDILCLKFHPLQEHVVKEELLNALYCEFINRVNEVGVDVNRAIAHPYSQALIQYVCGLGPRKGTHLLKILKQNNTRLESRTQLVTMCHMGPKVFMNCAGFLKIDTASLGDSTDSYIEVLDGSRVHPETYEWARKMAVDALEYDESAEDANPAGALEEILENPERLKDLDLDAFAEELERQGYGDKHITLYDIRAELSCRYKDLRTAYRSPNTEEIFNMLTKETPETFYIGKLIICNVTGIAHRRPQGESYDQAIRNDETGLWQCPFCQQDNFPELSEVWNHFDSGSCPGQAIGVKTRLDNGVTGFIPTKFLSDKVVKRPEERVKVGMTVHCRIMKIDIEKFSADLTCRTSDLMDRNNEWKLPKDTYYDFDAEAADHKQEEDMKRKQQRTTYIKRVIAHPSFHNINFKQAEKMMETMDQGDVIIRPSSKGENHLTVTWKVSAGIYQHVDVREEGKENAFSLGATLWINSEEFEDLDEIVARYVQPMASFARDLLNHKYYQDCSGGDRKKLEELLIKTKKEKPTFIPYFICACKELPGKFLLGYQPRGKPRIEYVTVTPEGFRYRGQIFPTVNGLFRWFKDHYQDPVPGITPSSSNRTRTPASINATPANINLADLTRAVNALPQNMTSQMFSAIAAVTGQGQNPNATPAQWASSQYGYGGSGGGSSAYHVFPTPAQQPVATPLMTPSYSYTTPSQPITTPQYHQLQASTTPQSTQAQPQPSSSSRQRQQQPKSNSHAAIDWGKMAEQWLQEKEAERRKQKQRLTPRPSPSPMIESTPMSIAGDATPLLDEMDR.

Acidic residues-rich tracts occupy residues 1–14, 32–49, and 59–80; these read MSDFVESEAEESEE, EEEDDDEEEEEENLDDQD, and NDDDDEEEGEEDEGSDSGDSED. The tract at residues 1–197 is disordered; the sequence is MSDFVESEAE…DDGQPLKKPK (197 aa). N-acetylserine is present on Ser2. Positions 2–485 are interaction with IWS1; that stretch reads SDFVESEAEE…PKMQNAAKAS (484 aa). The tract at residues 2–916 is interaction with PAAF1; that stretch reads SDFVESEAEE…PPVLRQAVSL (915 aa). Residues 3-51 are a coiled coil; it reads DFVESEAEESEEEYNHEGEVVPRVTKKFVEEEDDDEEEEEENLDDQDER. A phosphoserine mark is found at Ser7 and Ser12. A phosphoserine mark is found at Ser73, Ser78, and Ser91. The span at 95 to 105 shows a compositional bias: acidic residues; that stretch reads RLEDDDFDLIE. The span at 111–122 shows a compositional bias: basic residues; the sequence is KVKRGQKYRRVK. Ser125 carries the phosphoserine modification. Acidic residues-rich tracts occupy residues 126–136, 150–160, and 169–190; these read DDDEDDEEEYG, FQDEEGEEGQE, and PDEEEEDDEESDIDDFIVDDDG. The residue at position 267 (Ser267) is a Phosphoserine. Residues 317 to 1300 are interaction with KDM6A; sequence ADWIYRNAFA…NEWKLPKDTY (984 aa). Positions 489 to 520 are disordered; the sequence is LKRIKEDGDEEGEGEEAEDEEQRGPELKQASR. The segment covering 495-509 has biased composition (acidic residues); that stretch reads DGDEEGEGEEAEDEE. Basic and acidic residues predominate over residues 510–520; that stretch reads QRGPELKQASR. Lys743 is modified (N6-acetyllysine). In terms of domain architecture, S1 motif spans 1213–1282; it reads WNHFDSGSCP…EKFSADLTCR (70 aa). One can recognise an SH2 domain in the interval 1325 to 1431; that stretch reads YIKRVIAHPS…FARDLLNHKY (107 aa). Tyr1515 is subject to Phosphotyrosine. Residue Thr1523 is modified to Phosphothreonine. Ser1526 bears the Phosphoserine mark. Phosphothreonine is present on residues Thr1530 and Thr1532. The residue at position 1535 (Ser1535) is a Phosphoserine. Thr1539 carries the phosphothreonine modification. Residues 1633-1726 form an interaction with histone H2B and H3 region; sequence PQYHQLQAST…ATPLLDEMDR (94 aa). The tract at residues 1636–1726 is disordered; sequence HQLQASTTPQ…ATPLLDEMDR (91 aa). Residues 1639 to 1664 are compositionally biased toward low complexity; that stretch reads QASTTPQSTQAQPQPSSSSRQRQQQP. Lys1676 carries the post-translational modification N6-acetyllysine. Thr1697 is modified (phosphothreonine). Residues Ser1701 and Ser1703 each carry the phosphoserine modification. Phosphothreonine occurs at positions 1709 and 1718.

It belongs to the SPT6 family. As to quaternary structure, interacts with RNA polymerase II and the DRB sensitivity-inducing factor complex (DSIF complex), which is composed of SUPT5H and SUPT4H1 or SUPT4H2. Interacts with PAAF1. Interacts with histone H2B and H3. Interacts (via SH2 domain) with POLR2A phosphorylated at 'Ser-2'. Interacts (via SH2 domain) with SETD1A. Interacts with IWS1, KDM6A and AICDA. Interacts with WDR43. In terms of processing, dephosphorylated at Ser-1530 by the PNUTS-PP1 complex during RNA polymerase II transcription pause-release. In terms of tissue distribution, ubiquitously expressed.

It localises to the nucleus. Functionally, histone H3-H4 chaperone that plays a key role in the regulation of transcription elongation and mRNA processing. Enhances the transcription elongation by RNA polymerase II (RNAPII) and is also required for the efficient activation of transcriptional elongation by the HIV-1 nuclear transcriptional activator, Tat. Besides chaperoning histones in transcription, acts to transport and splice mRNA by forming a complex with IWS1 and the C-terminal domain (CTD) of the RNAPII subunit RPB1 (POLR2A). The SUPT6H:IWS1:CTD complex recruits mRNA export factors (ALYREF/THOC4, EXOSC10) as well as histone modifying enzymes (such as SETD2), to ensure proper mRNA splicing, efficient mRNA export and elongation-coupled H3K36 methylation, a signature chromatin mark of active transcription. SUPT6H via its association with SETD1A, regulates both class-switch recombination and somatic hypermutation through formation of H3K4me3 epigenetic marks on activation-induced cytidine deaminase (AICDA) target loci. Promotes the activation of the myogenic gene program by entailing erasure of the repressive H3K27me3 epigenetic mark through stabilization of the chromatin interaction of the H3K27 demethylase KDM6A. In Mus musculus (Mouse), this protein is Transcription elongation factor SPT6 (Supt6h).